Reading from the N-terminus, the 90-residue chain is uncharacterized protein (90 aa).

A helical transmembrane segment spans residues 12-32 (VVGGLSFWSFSAGVIMIVNAF).

The protein resides in the membrane. This is an uncharacterized protein from Mycoplasma pneumoniae (strain ATCC 29342 / M129 / Subtype 1) (Mycoplasmoides pneumoniae).